A 221-amino-acid chain; its full sequence is Large ribosomal subunit protein uL3 (221 aa).

Residues 123-156 (GFAGSIKRHNQSRGPESHGSRYHRRPGSMGPIKG) form a disordered region.

It belongs to the universal ribosomal protein uL3 family. Part of the 50S ribosomal subunit. Forms a cluster with proteins L14 and L19.

One of the primary rRNA binding proteins, it binds directly near the 3'-end of the 23S rRNA, where it nucleates assembly of the 50S subunit. In Aster yellows witches'-broom phytoplasma (strain AYWB), this protein is Large ribosomal subunit protein uL3.